We begin with the raw amino-acid sequence, 229 residues long: Large ribosomal subunit protein uL1 (229 aa).

The protein belongs to the universal ribosomal protein uL1 family. In terms of assembly, part of the 50S ribosomal subunit.

Its function is as follows. Binds directly to 23S rRNA. The L1 stalk is quite mobile in the ribosome, and is involved in E site tRNA release. Functionally, protein L1 is also a translational repressor protein, it controls the translation of the L11 operon by binding to its mRNA. In Actinobacillus pleuropneumoniae serotype 5b (strain L20), this protein is Large ribosomal subunit protein uL1.